Here is a 227-residue protein sequence, read N- to C-terminus: Lipoprotein-releasing system ATP-binding protein LolD (227 aa).

Residues 7–227 (LSCRNLGKSY…RLEGGRLVEA (221 aa)) form the ABC transporter domain. 43–50 (GTSGSGKS) serves as a coordination point for ATP.

The protein belongs to the ABC transporter superfamily. Lipoprotein translocase (TC 3.A.1.125) family. In terms of assembly, the complex is composed of two ATP-binding proteins (LolD) and two transmembrane proteins (LolC and LolE).

The protein resides in the cell inner membrane. Part of the ABC transporter complex LolCDE involved in the translocation of mature outer membrane-directed lipoproteins, from the inner membrane to the periplasmic chaperone, LolA. Responsible for the formation of the LolA-lipoprotein complex in an ATP-dependent manner. This Pseudomonas syringae pv. tomato (strain ATCC BAA-871 / DC3000) protein is Lipoprotein-releasing system ATP-binding protein LolD.